Here is a 194-residue protein sequence, read N- to C-terminus: MYIAFEGVDCVGKSTQIELLKKCFKDAIFTKEPGGSELGVHLRKILLESKMQFSKKAELLLFLADRANLIDIHLVQNKNKLIISDRSFVSNMAYAKFDFDQNILFDLNSFATGGFFPQKIVFLHGSKELIEQRLSKKNLDSIEKRGVEYFLNIQNALEETLEILKTKIDIKILKLDASLSIENLHEKIKEFIND.

7–14 (GVDCVGKS) provides a ligand contact to ATP.

The protein belongs to the thymidylate kinase family.

It carries out the reaction dTMP + ATP = dTDP + ADP. In terms of biological role, phosphorylation of dTMP to form dTDP in both de novo and salvage pathways of dTTP synthesis. In Campylobacter lari (strain RM2100 / D67 / ATCC BAA-1060), this protein is Thymidylate kinase.